The sequence spans 531 residues: Pancreatic secretory granule membrane major glycoprotein GP2 (531 aa).

The signal sequence occupies residues 1-21 (MVGCDLLWLAAASCVLTLVSP). The N-linked (GlcNAc...) asparagine glycan is linked to N33. The segment at 34-53 (SSNLDLDCGSPDSPSSGICF) is beta hairpin. 11 disulfides stabilise this stretch: C41–C52, C56–C151, C79–C169, C101–C139, C107–C174, C132–C140, C184–C194, C188–C203, C205–C235, C223–C314, and C255–C278. A D10C region spans residues 54 to 74 (DPCQNHTVLNDPTRSTENNDS). N-linked (GlcNAc...) asparagine glycosylation is found at N58 and N72. The region spanning 180–224 (APKNCEITCRPEEECVFQNNNWSCVCRQDLHVSDSQSLQPLLDCG) is the EGF-like domain. The N-linked (GlcNAc...) asparagine glycan is linked to N200. The interval 222–315 (DCGDNEIKVK…FRVNVNFQCA (94 aa)) is ZP-N. A ZP domain is found at 222–478 (DCGDNEIKVK…PSCSTNRLRS (257 aa)). N-linked (GlcNAc...) asparagine glycosylation is found at N256 and N285. The segment at 316-339 (YPLDMSVSLETALQPIVSSLTVDV) is flexible ZP-N/ZP-C linker. The interval 340–351 (DGAGEFNVKMAL) is internal hydrophobic patch (IHP). The tract at residues 340–478 (DGAGEFNVKM…PSCSTNRLRS (139 aa)) is ZP-C. Disulfide bonds link C395/C455, C416/C471, and C460/C467. Residues 485–493 (YNRVLDLGP) form an external hydrophobic patch (EHP) region.

In terms of assembly, interacts with SYCN. Interacts with bacterial adhesin fimH. Post-translationally, N-glycosylated. In terms of tissue distribution, specifically expressed by M (microfold) cells which are atypical epithelial cells of the intestine.

It localises to the zymogen granule membrane. The protein resides in the secreted. The protein localises to the cell membrane. Its subcellular location is the apical cell membrane. It is found in the membrane raft. It localises to the endosome. Its function is as follows. Functions as an intestinal M-cell transcytotic receptor specific of type-I-piliated bacteria that participates in the mucosal immune response toward these bacteria. At the apical membrane of M-cells it binds fimH, a protein of the bacteria type I pilus tip. Internalizes bound bacteria, like E.coli and S.typhimurium, from the lumen of the intestine and delivers them, through M-cells, to the underlying organized lymphoid follicles where they are captured by antigen-presenting dendritic cells to elicit a mucosal immune response. In Mus musculus (Mouse), this protein is Pancreatic secretory granule membrane major glycoprotein GP2.